We begin with the raw amino-acid sequence, 176 residues long: MKKTRQEKERMVEELTEKLSQAESAVLVDYRGLDVAQMNELRRQLGDSNVDFKVVKNTLTSIAAENAGIDEINQYLEGPVGIAFGYDDPVVPAKILNDFSKENEELEFKAAILGESVVGEEKVKNLAKLPSREELLGKVAGTFQAPIAGFAGACQGIIRKFVYAVDAVRQEKEDAS.

This sequence belongs to the universal ribosomal protein uL10 family. Part of the ribosomal stalk of the 50S ribosomal subunit. The N-terminus interacts with L11 and the large rRNA to form the base of the stalk. The C-terminus forms an elongated spine to which L12 dimers bind in a sequential fashion forming a multimeric L10(L12)X complex.

Its function is as follows. Forms part of the ribosomal stalk, playing a central role in the interaction of the ribosome with GTP-bound translation factors. The chain is Large ribosomal subunit protein uL10 from Natranaerobius thermophilus (strain ATCC BAA-1301 / DSM 18059 / JW/NM-WN-LF).